The primary structure comprises 162 residues: Putative 4-hydroxy-4-methyl-2-oxoglutarate aldolase (162 aa).

Substrate is bound by residues 75 to 78 (GDML) and Arg-97. Position 98 (Asp-98) interacts with a divalent metal cation.

This sequence belongs to the class II aldolase/RraA-like family. As to quaternary structure, homotrimer. A divalent metal cation serves as cofactor.

The catalysed reaction is 4-hydroxy-4-methyl-2-oxoglutarate = 2 pyruvate. It carries out the reaction oxaloacetate + H(+) = pyruvate + CO2. In terms of biological role, catalyzes the aldol cleavage of 4-hydroxy-4-methyl-2-oxoglutarate (HMG) into 2 molecules of pyruvate. Also contains a secondary oxaloacetate (OAA) decarboxylase activity due to the common pyruvate enolate transition state formed following C-C bond cleavage in the retro-aldol and decarboxylation reactions. This chain is Putative 4-hydroxy-4-methyl-2-oxoglutarate aldolase, found in Ectopseudomonas mendocina (strain ymp) (Pseudomonas mendocina).